We begin with the raw amino-acid sequence, 315 residues long: Rab effector Noc2 (315 aa).

The RabBD domain occupies 41 to 158; it reads QRRKQHLSPA…KRSGAWFYKG (118 aa). The FYVE-type zinc finger occupies 89-146; that stretch reads GNGLSQCLLCGEVLGFLGSSSVFCKDCRKKVCTKCGIEASPGQKRPLWLCKICSEQRE. Zn(2+)-binding residues include C95, C98, C112, C115, C120, C123, C138, and C141. A disordered region spans residues 170-315; the sequence is GRADDPHFRP…APAGPSSCLG (146 aa). 2 stretches are compositionally biased toward basic and acidic residues: residues 184 to 193 and 221 to 240; these read PAEREPRSSE and LEDR…KPWK. Over residues 262-275 the composition is skewed to polar residues; the sequence is GCQSSLASGETGTG. Positions 298–315 are enriched in low complexity; sequence GRAPAADAAPAGPSSCLG.

Recruited to dense-core vesicles through specific interaction with RAB27A in endocrine cells. Interacts with RAB3A, RAB3B, RAB3C and RAB3D. Interacts with ZYX. Moderate to high levels of expression in thyroid, ovary, stomach, heart, pancreas, skeletal muscle, kidney and liver. Also detected in epithelial cells.

It localises to the cytoplasm. It is found in the cytoplasmic vesicle. The protein localises to the secretory vesicle membrane. Functionally, rab GTPase effector involved in the late steps of regulated exocytosis, both in endocrine and exocrine cells. Acts as a potential RAB3B effector protein in epithelial cells. This Homo sapiens (Human) protein is Rab effector Noc2 (RPH3AL).